Consider the following 397-residue polypeptide: Lysophospholipid transporter LplT (397 aa).

Topologically, residues M1–K17 are periplasmic. Residues A18 to L38 traverse the membrane as a helical segment. Over A39–P52 the chain is Cytoplasmic. Residues I53–A73 form a helical membrane-spanning segment. Over D74–L90 the chain is Periplasmic. A helical membrane pass occupies residues L91–V111. At G112–T144 the chain is on the cytoplasmic side. The chain crosses the membrane as a helical span at residues I145–V165. Position 166 (A166) is a topological domain, periplasmic. The helical transmembrane segment at L167 to L187 threads the bilayer. Over A188–S226 the chain is Cytoplasmic. A helical transmembrane segment spans residues L227–L247. At G248 to T256 the chain is on the periplasmic side. The chain crosses the membrane as a helical span at residues Y257–V277. Over T278–E280 the chain is Cytoplasmic. A helical membrane pass occupies residues T281–L301. Residues Q302–E304 lie on the Periplasmic side of the membrane. The helical transmembrane segment at L305–P325 threads the bilayer. Residues L326–A343 are Cytoplasmic-facing. A helical transmembrane segment spans residues I344 to L364. The Periplasmic portion of the chain corresponds to A365 to V366. The chain crosses the membrane as a helical span at residues M367–I387. Residues T388 to H397 lie on the Cytoplasmic side of the membrane.

This sequence belongs to the major facilitator superfamily. LplT (TC 2.A.1.42) family.

The protein localises to the cell inner membrane. In terms of biological role, catalyzes the facilitated diffusion of 2-acyl-glycero-3-phosphoethanolamine (2-acyl-GPE) into the cell. The polypeptide is Lysophospholipid transporter LplT (Escherichia coli O7:K1 (strain IAI39 / ExPEC)).